The sequence spans 382 residues: MTSAPRPRPTLDDLPLREDLRGKSPYGAPQLAVPVRLNTNENPHPPTQALVDDVVRSVGEAAVDLHRYPDRDAVALRTDLANYLTAQTGTRIGFENVWAANGSNEILQQLLQAFGGPGRTAIGFVPSYSMHPIISDGTHTEWVETARADGFGLDIDAAIAVVSDRRPDVVFITSPNNPTGQSVSLTELRRLLDVVPGILIVDEAYGEFSSQPSAVGLIEEYPTRLVVTRTMSKAFAFAGGRLGYLVATPALIDALLLVRLPYHLSSVTQVAARAALRHAQDTLGSVATLIAERERVSKKLAGMGFRVIPSDANFVLFGEFADAPAAWQRYLDQGVLIRDVGIPGYLRATTGLADENDAFLRASARIAATDLAPAAASPVGAP.

Residues 1–28 (MTSAPRPRPTLDDLPLREDLRGKSPYGA) are disordered. Basic and acidic residues predominate over residues 9–22 (PTLDDLPLREDLRG). The residue at position 233 (lysine 233) is an N6-(pyridoxal phosphate)lysine.

The protein belongs to the class-II pyridoxal-phosphate-dependent aminotransferase family. Histidinol-phosphate aminotransferase subfamily. Homodimer. Requires pyridoxal 5'-phosphate as cofactor.

It catalyses the reaction L-histidinol phosphate + 2-oxoglutarate = 3-(imidazol-4-yl)-2-oxopropyl phosphate + L-glutamate. The protein operates within amino-acid biosynthesis; L-histidine biosynthesis; L-histidine from 5-phospho-alpha-D-ribose 1-diphosphate: step 7/9. The sequence is that of Histidinol-phosphate aminotransferase from Mycobacterium marinum (strain ATCC BAA-535 / M).